The chain runs to 263 residues: Probable cyclic nucleotide phosphodiesterase CPS_4178 (263 aa).

Residues Asp-21, His-23, Asp-62, Asn-94, His-160, His-198, and His-200 each coordinate Fe cation. Residues His-23, Asp-62, and 94–95 (NH) contribute to the AMP site. AMP is bound at residue His-200.

The protein belongs to the cyclic nucleotide phosphodiesterase class-III family. The cofactor is Fe(2+).

In Colwellia psychrerythraea (strain 34H / ATCC BAA-681) (Vibrio psychroerythus), this protein is Probable cyclic nucleotide phosphodiesterase CPS_4178.